We begin with the raw amino-acid sequence, 92 residues long: Small ribosomal subunit protein uS19c (92 aa).

It belongs to the universal ribosomal protein uS19 family.

It is found in the plastid. The protein localises to the chloroplast. Its function is as follows. Protein S19 forms a complex with S13 that binds strongly to the 16S ribosomal RNA. This chain is Small ribosomal subunit protein uS19c, found in Chlorokybus atmophyticus (Soil alga).